Reading from the N-terminus, the 245-residue chain is Carbohydrate deacetylase (245 aa).

Positions 59 and 125 each coordinate Mg(2+).

The protein belongs to the YdjC deacetylase family. In terms of assembly, homodimer. Mg(2+) is required as a cofactor.

Probably catalyzes the deacetylation of acetylated carbohydrates an important step in the degradation of oligosaccharides. The sequence is that of Carbohydrate deacetylase from Listeria monocytogenes serotype 4a (strain HCC23).